A 335-amino-acid chain; its full sequence is Ketol-acid reductoisomerase (NADP(+)) (335 aa).

The region spanning Ser5 to Thr185 is the KARI N-terminal Rossmann domain. Residues Tyr28 to Gln31, Ser56, and Asp86 to Gln89 contribute to the NADP(+) site. The active site involves His111. Gly137 serves as a coordination point for NADP(+). The KARI C-terminal knotted domain maps to Thr186–Gly331. 4 residues coordinate Mg(2+): Asp194, Glu198, Glu230, and Glu234. Substrate is bound at residue Ser255.

This sequence belongs to the ketol-acid reductoisomerase family. The cofactor is Mg(2+).

It catalyses the reaction (2R)-2,3-dihydroxy-3-methylbutanoate + NADP(+) = (2S)-2-acetolactate + NADPH + H(+). It carries out the reaction (2R,3R)-2,3-dihydroxy-3-methylpentanoate + NADP(+) = (S)-2-ethyl-2-hydroxy-3-oxobutanoate + NADPH + H(+). Its pathway is amino-acid biosynthesis; L-isoleucine biosynthesis; L-isoleucine from 2-oxobutanoate: step 2/4. It functions in the pathway amino-acid biosynthesis; L-valine biosynthesis; L-valine from pyruvate: step 2/4. In terms of biological role, involved in the biosynthesis of branched-chain amino acids (BCAA). Catalyzes an alkyl-migration followed by a ketol-acid reduction of (S)-2-acetolactate (S2AL) to yield (R)-2,3-dihydroxy-isovalerate. In the isomerase reaction, S2AL is rearranged via a Mg-dependent methyl migration to produce 3-hydroxy-3-methyl-2-ketobutyrate (HMKB). In the reductase reaction, this 2-ketoacid undergoes a metal-dependent reduction by NADPH to yield (R)-2,3-dihydroxy-isovalerate. In Saccharolobus islandicus (strain M.16.27) (Sulfolobus islandicus), this protein is Ketol-acid reductoisomerase (NADP(+)).